Reading from the N-terminus, the 405-residue chain is 4-hydroxy-3-methylbut-2-en-1-yl diphosphate synthase (flavodoxin) (405 aa).

The [4Fe-4S] cluster site is built by Cys-297, Cys-300, Cys-343, and Glu-350.

The protein belongs to the IspG family. Requires [4Fe-4S] cluster as cofactor.

It catalyses the reaction (2E)-4-hydroxy-3-methylbut-2-enyl diphosphate + oxidized [flavodoxin] + H2O + 2 H(+) = 2-C-methyl-D-erythritol 2,4-cyclic diphosphate + reduced [flavodoxin]. It participates in isoprenoid biosynthesis; isopentenyl diphosphate biosynthesis via DXP pathway; isopentenyl diphosphate from 1-deoxy-D-xylulose 5-phosphate: step 5/6. Its function is as follows. Converts 2C-methyl-D-erythritol 2,4-cyclodiphosphate (ME-2,4cPP) into 1-hydroxy-2-methyl-2-(E)-butenyl 4-diphosphate. This is 4-hydroxy-3-methylbut-2-en-1-yl diphosphate synthase (flavodoxin) from Francisella tularensis subsp. tularensis (strain FSC 198).